The following is a 419-amino-acid chain: UDP-N-acetylglucosamine 1-carboxyvinyltransferase (419 aa).

22–23 (KN) is a binding site for phosphoenolpyruvate. UDP-N-acetyl-alpha-D-glucosamine is bound at residue Arg-92. Cys-116 functions as the Proton donor in the catalytic mechanism. The residue at position 116 (Cys-116) is a 2-(S-cysteinyl)pyruvic acid O-phosphothioketal. UDP-N-acetyl-alpha-D-glucosamine contacts are provided by residues 121-125 (RPIDL), Asp-306, and Ile-328.

The protein belongs to the EPSP synthase family. MurA subfamily.

Its subcellular location is the cytoplasm. It carries out the reaction phosphoenolpyruvate + UDP-N-acetyl-alpha-D-glucosamine = UDP-N-acetyl-3-O-(1-carboxyvinyl)-alpha-D-glucosamine + phosphate. The protein operates within cell wall biogenesis; peptidoglycan biosynthesis. Its function is as follows. Cell wall formation. Adds enolpyruvyl to UDP-N-acetylglucosamine. Target for the antibiotic fosfomycin. The sequence is that of UDP-N-acetylglucosamine 1-carboxyvinyltransferase from Streptococcus pneumoniae (strain Hungary19A-6).